The chain runs to 340 residues: Deubiquitinase SseL (340 aa).

Histidine 223 is a catalytic residue. The active-site Nucleophile is cysteine 285.

It belongs to the peptidase C79 family.

Its subcellular location is the secreted. It is found in the host cytoplasm. Effector proteins function to alter host cell physiology and promote bacterial survival in host tissues. This protease targets the host cell ubiquitin pathway by acting as a deubiquitinase in infected host cells. In Salmonella paratyphi A (strain ATCC 9150 / SARB42), this protein is Deubiquitinase SseL (sseL).